The sequence spans 478 residues: Membrane-bound lytic murein transglycosylase F (478 aa).

The N-terminal stretch at 1–29 is a signal peptide; it reads MFPDSSYLFSMRSLSRFLIAIFGCGALLA. The segment at 30–269 is non-LT domain; sequence SCDSFERSVL…RLLDRYYGHI (240 aa). Residues 271 to 478 form an LT domain region; that stretch reads RLHHTDVNGI…RKEDDSWQEF (208 aa). Residue Glu316 is part of the active site.

This sequence in the N-terminal section; belongs to the bacterial solute-binding protein 3 family. In the C-terminal section; belongs to the transglycosylase Slt family.

It localises to the cell outer membrane. The enzyme catalyses Exolytic cleavage of the (1-&gt;4)-beta-glycosidic linkage between N-acetylmuramic acid (MurNAc) and N-acetylglucosamine (GlcNAc) residues in peptidoglycan, from either the reducing or the non-reducing ends of the peptidoglycan chains, with concomitant formation of a 1,6-anhydrobond in the MurNAc residue.. Its function is as follows. Murein-degrading enzyme that degrades murein glycan strands and insoluble, high-molecular weight murein sacculi, with the concomitant formation of a 1,6-anhydromuramoyl product. Lytic transglycosylases (LTs) play an integral role in the metabolism of the peptidoglycan (PG) sacculus. Their lytic action creates space within the PG sacculus to allow for its expansion as well as for the insertion of various structures such as secretion systems and flagella. This is Membrane-bound lytic murein transglycosylase F from Nitrosospira multiformis (strain ATCC 25196 / NCIMB 11849 / C 71).